The following is a 615-amino-acid chain: 9-cis-epoxycarotenoid dioxygenase NCED1, chloroplastic (615 aa).

The N-terminal 41 residues, 1 to 41 (MPSPASNTWINTTLPSSCSSPFKDLASTSSSPTTLLPFKKR), are a transit peptide targeting the chloroplast. Disordered stretches follow at residues 20 to 45 (SPFKDLASTSSSPTTLLPFKKRSSSN) and 62 to 101 (YQPTSTSTTTTPTPIKPTTTTTTTTPHRETKPLSDTKQPF). 2 stretches are compositionally biased toward low complexity: residues 27–37 (STSSSPTTLLP) and 64–86 (PTSTSTTTTPTPIKPTTTTTTTT). 3 residues coordinate Fe cation: His316, His365, and His430. A coiled-coil region spans residues 571 to 592 (KEWKSELQIVNAQNLKLEASIK). His602 is a Fe cation binding site.

This sequence belongs to the carotenoid oxygenase family. Fe(2+) is required as a cofactor.

It localises to the plastid. The protein localises to the chloroplast thylakoid membrane. It catalyses the reaction a 9-cis-epoxycarotenoid + O2 = a 12'-apo-carotenal + 2-cis,4-trans-xanthoxin. The catalysed reaction is 9-cis-violaxanthin + O2 = (3S,5R,6S)-5,6-epoxy-3-hydroxy-5,6-dihydro-12'-apo-beta-caroten-12'-al + 2-cis,4-trans-xanthoxin. The enzyme catalyses 9'-cis-neoxanthin + O2 = (3S,5R,6R)-3,5-dihydroxy-6,7-didehydro-5,6-dihydro-12'-apo-beta-caroten-12'-al + 2-cis,4-trans-xanthoxin. Has a 11,12(11',12') 9-cis epoxycarotenoid cleavage activity. Catalyzes the first step of abscisic-acid biosynthesis from carotenoids, in response to water stress. Active on 9-cis-violaxanthin and 9'-cis-neoxanthin, but not on the all-trans isomers of violaxanthin and neoxanthin. The chain is 9-cis-epoxycarotenoid dioxygenase NCED1, chloroplastic (NCED1) from Phaseolus vulgaris (Kidney bean).